Reading from the N-terminus, the 88-residue chain is Apolipoprotein C-I (88 aa).

An N-terminal signal peptide occupies residues 1-26 (MRLFLSLPVLVVVLAMVLEGPAPAQA).

Belongs to the apolipoprotein C1 family.

It localises to the secreted. Inhibitor of lipoprotein binding to the low density lipoprotein (LDL) receptor, LDL receptor-related protein, and very low density lipoprotein (VLDL) receptor. Associates with high density lipoproteins (HDL) and the triacylglycerol-rich lipoproteins in the plasma and makes up about 10% of the protein of the VLDL and 2% of that of HDL. Appears to interfere directly with fatty acid uptake and is also the major plasma inhibitor of cholesteryl ester transfer protein (CETP). Binds free fatty acids and reduces their intracellular esterification. Modulates the interaction of APOE with beta-migrating VLDL and inhibits binding of beta-VLDL to the LDL receptor-related protein. The chain is Apolipoprotein C-I (APOC1) from Ailurus fulgens (Himalayan red panda).